The chain runs to 284 residues: 2-dehydro-3-deoxyphosphooctonate aldolase (284 aa).

It belongs to the KdsA family.

The protein resides in the cytoplasm. It catalyses the reaction D-arabinose 5-phosphate + phosphoenolpyruvate + H2O = 3-deoxy-alpha-D-manno-2-octulosonate-8-phosphate + phosphate. Its pathway is carbohydrate biosynthesis; 3-deoxy-D-manno-octulosonate biosynthesis; 3-deoxy-D-manno-octulosonate from D-ribulose 5-phosphate: step 2/3. It participates in bacterial outer membrane biogenesis; lipopolysaccharide biosynthesis. In Escherichia fergusonii (strain ATCC 35469 / DSM 13698 / CCUG 18766 / IAM 14443 / JCM 21226 / LMG 7866 / NBRC 102419 / NCTC 12128 / CDC 0568-73), this protein is 2-dehydro-3-deoxyphosphooctonate aldolase.